The following is a 56-amino-acid chain: U4-myrmicitoxin-Tb1a (56 aa).

Positions 1 to 26 (MQPSYLLLTFAIIFVMVIMYSPAVEA) are cleaved as a signal peptide. Residues 27–40 (KAGADADADAHADA) constitute a propeptide that is removed on maturation. Residue Gly-53 is modified to Glycine amide.

Post-translationally, contains 1 disulfide bond. In terms of tissue distribution, expressed by the venom gland.

It localises to the secreted. Venom protein with unknown function. Does not induce paralysis when a high dose is administered by intrathoracic injection into the blowfly Lucilia caesar. This is U4-myrmicitoxin-Tb1a from Tetramorium bicarinatum (Tramp ant).